Consider the following 95-residue polypeptide: uncharacterized protein (95 aa).

Residues 12–32 traverse the membrane as a helical segment; it reads IASLVVSVVVLLIGLILWFFI.

It localises to the cell membrane. This is an uncharacterized protein from Escherichia coli O6:H1 (strain CFT073 / ATCC 700928 / UPEC).